A 62-amino-acid chain; its full sequence is Photosystem II reaction center protein Z (62 aa).

2 consecutive transmembrane segments (helical) span residues 8–28 (AVFALIATSSILLISVPVVFA) and 41–61 (FSGTSLWLGLVFLVGILNSLI).

The protein belongs to the PsbZ family. In terms of assembly, PSII is composed of 1 copy each of membrane proteins PsbA, PsbB, PsbC, PsbD, PsbE, PsbF, PsbH, PsbI, PsbJ, PsbK, PsbL, PsbM, PsbT, PsbY, PsbZ, Psb30/Ycf12, at least 3 peripheral proteins of the oxygen-evolving complex and a large number of cofactors. It forms dimeric complexes.

It is found in the plastid. The protein resides in the chloroplast thylakoid membrane. Its function is as follows. May control the interaction of photosystem II (PSII) cores with the light-harvesting antenna, regulates electron flow through the 2 photosystem reaction centers. PSII is a light-driven water plastoquinone oxidoreductase, using light energy to abstract electrons from H(2)O, generating a proton gradient subsequently used for ATP formation. The sequence is that of Photosystem II reaction center protein Z from Spinacia oleracea (Spinach).